Consider the following 426-residue polypeptide: Glutamate-1-semialdehyde 2,1-aminomutase (426 aa).

Lys-265 carries the N6-(pyridoxal phosphate)lysine modification.

Belongs to the class-III pyridoxal-phosphate-dependent aminotransferase family. HemL subfamily. In terms of assembly, homodimer. Pyridoxal 5'-phosphate serves as cofactor.

It localises to the cytoplasm. It carries out the reaction (S)-4-amino-5-oxopentanoate = 5-aminolevulinate. Its pathway is porphyrin-containing compound metabolism; protoporphyrin-IX biosynthesis; 5-aminolevulinate from L-glutamyl-tRNA(Glu): step 2/2. The protein is Glutamate-1-semialdehyde 2,1-aminomutase of Klebsiella pneumoniae (strain 342).